The chain runs to 190 residues: Probable RNA-binding protein 18 (190 aa).

Residues His25–Ala106 enclose the RRM domain. A disordered region spans residues Val166 to Arg190.

This is Probable RNA-binding protein 18 (RBM18) from Pongo abelii (Sumatran orangutan).